Reading from the N-terminus, the 310-residue chain is Ribosomal RNA small subunit methyltransferase H (310 aa).

Residues 32–34 (GGH), Asp-52, Ala-83, Asp-100, and Gln-107 contribute to the S-adenosyl-L-methionine site.

Belongs to the methyltransferase superfamily. RsmH family.

It is found in the cytoplasm. The catalysed reaction is cytidine(1402) in 16S rRNA + S-adenosyl-L-methionine = N(4)-methylcytidine(1402) in 16S rRNA + S-adenosyl-L-homocysteine + H(+). Specifically methylates the N4 position of cytidine in position 1402 (C1402) of 16S rRNA. In Geobacillus sp. (strain WCH70), this protein is Ribosomal RNA small subunit methyltransferase H.